Reading from the N-terminus, the 251-residue chain is Ribonuclease HII (251 aa).

One can recognise an RNase H type-2 domain in the interval G32–L223. 3 residues coordinate a divalent metal cation: D38, E39, and D132.

It belongs to the RNase HII family. Requires Mn(2+) as cofactor. The cofactor is Mg(2+).

Its subcellular location is the cytoplasm. The catalysed reaction is Endonucleolytic cleavage to 5'-phosphomonoester.. Endonuclease that specifically degrades the RNA of RNA-DNA hybrids. This Nocardia farcinica (strain IFM 10152) protein is Ribonuclease HII.